The primary structure comprises 672 residues: Segment polarity protein dishevelled homolog mig-5 (672 aa).

One can recognise a DIX domain in the interval 9 to 91; sequence CSQIKVFYYL…GFYEIFLVST (83 aa). 3 disordered regions span residues 97 to 127, 150 to 174, and 187 to 215; these read LPRNSGTMTRPQRTALDKRRRRSADFDATPY, YTSNSEDPYQYDEHTRRTGDDSSLY, and DDDRRRKKQKKERFRRPYVPSTISSATES. The span at 98–108 shows a compositional bias: polar residues; that stretch reads PRNSGTMTRPQ. Over residues 160–169 the composition is skewed to basic and acidic residues; sequence YDEHTRRTGD. Residues 191–202 show a composition bias toward basic residues; the sequence is RRKKQKKERFRR. One can recognise a PDZ domain in the interval 226 to 294; the sequence is EIYLPMKNVP…PQAVRSLREA (69 aa). The DEP domain maps to 427–501; it reads PDSGLAVKNR…TEKCYYVFGD (75 aa). Residues 604-672 form a disordered region; that stretch reads KNNHRQVPAP…SNSRTRILRT (69 aa). Polar residues predominate over residues 660–672; it reads ENSSNSRTRILRT.

The protein belongs to the DSH family.

Its subcellular location is the cytoplasm. The protein resides in the cell cortex. The protein localises to the cell membrane. It localises to the cell junction. Plays a role in the signal transduction pathways mediated by multiple Wnt genes. Functions redundantly with other dishevelled family members throughout development. During embryonic and larval development, controls cell migration and/or cell fate specification of hypodermal cells, hypodermal seam cells, vulval precursor cells and, through distal tip cell migration, somatic gonad precursor cells. In early embryos, regulates the orientation of the mitotic spindle of blastomeres and specifically, along with dsh-2, is required for the correct mitotic spindle orientation of the ABar blastomere division plane. Controls the polarity and the asymmetric localization of downstream components of the wnt/beta-catenin asymmetry pathway, and in particular, controls the asymmetric localization of the wnt receptor lin-17/Frizzled in ectodermal blast B cells. May act redundantly with dsh-2 to regulate the expression and nuclear localization of the beta-catenin homolog wrm-2, but alone seems to be required for the polarity of wrm-2 during the asymmetric cell division of hypodermal seam cells. Also, maintains the polarity and migration of QL neuroblasts in larvae. During the embryonic development of touch receptor neurons, may act redundantly with dsh-1, downstream of wnt signaling ligands and the wnt receptor lin-17/Frizzled, to direct the growth of neurites of touch receptor neurons towards the anterior of the body of the worm and towards the PLM touch receptor neuron and other tail neurons. May play a role in the guidance of posterior D-type motor neuron axons along the anteroposterior axis. This chain is Segment polarity protein dishevelled homolog mig-5, found in Caenorhabditis elegans.